The sequence spans 251 residues: UPF0246 protein PEPE_1842 (251 aa).

The protein belongs to the UPF0246 family.

This Pediococcus pentosaceus (strain ATCC 25745 / CCUG 21536 / LMG 10740 / 183-1w) protein is UPF0246 protein PEPE_1842.